The chain runs to 1321 residues: Indole-3-acetaldehyde oxidase (1321 aa).

In terms of domain architecture, 2Fe-2S ferredoxin-type spans 1 to 90 (MSLVFAINGQ…HCNITTSEGL (90 aa)). Cysteine 42, cysteine 47, and cysteine 50 together coordinate [2Fe-2S] cluster. Residues 215–404 (VDSGMYRWCS…LSIEIPFWHS (190 aa)) form the FAD-binding PCMH-type domain.

Belongs to the xanthine dehydrogenase family. In terms of assembly, aldehyde oxidases (AO) are homodimers and heterodimers of AO subunits. AO-beta is a AAO1-AAO2 heterodimer; AO-gamma is a AAO2 homodimer. AAO2 also forms a dimer with AAO3. It depends on [2Fe-2S] cluster as a cofactor. FAD serves as cofactor. Requires Mo-molybdopterin as cofactor. As to expression, weakly expressed in roots, leaves and seedlings. In seedlings, mostly expressed in lower part of hypocotyls. Detectable in seeds and mature siliques at low levels.

Its subcellular location is the cytoplasm. The catalysed reaction is indole-3-acetaldehyde + O2 + H2O = (indol-3-yl)acetate + H2O2 + H(+). Its activity is regulated as follows. Strongly inhibited by iodoacetate, potassium cyanide (KCN), 2-mercaptoethanol, dithiothreitol (DTT), p-chloromercuribenzoate, menadione and estradiol. Weakly inhibited by 4'-(9-acridinylamino)methanesulfon-m-anisidine (mAMSA) and tritonX-100. Not affected by allopurinol. Functionally, in higher plant aldehyde oxidases (AO) appear to be homo- and heterodimeric assemblies of AO subunits with probably different physiological functions. In vitro, AO-gamma uses heptaldehyde, benzaldehyde, naphthaldehyde and cinnamaldehyde as substrates; AO-beta uses indole-3-acetaldehyde (IAAld), indole-3-aldehyde (IAld) and naphtaldehyde; the AAO2-AAO3 dimer uses abscisic aldehyde. The polypeptide is Indole-3-acetaldehyde oxidase (AAO2) (Arabidopsis thaliana (Mouse-ear cress)).